The sequence spans 232 residues: Putative N-acetylmannosamine-6-phosphate 2-epimerase (232 aa).

This sequence belongs to the NanE family.

The enzyme catalyses an N-acyl-D-glucosamine 6-phosphate = an N-acyl-D-mannosamine 6-phosphate. The protein operates within amino-sugar metabolism; N-acetylneuraminate degradation; D-fructose 6-phosphate from N-acetylneuraminate: step 3/5. Converts N-acetylmannosamine-6-phosphate (ManNAc-6-P) to N-acetylglucosamine-6-phosphate (GlcNAc-6-P). This is Putative N-acetylmannosamine-6-phosphate 2-epimerase from Synechococcus elongatus (strain ATCC 33912 / PCC 7942 / FACHB-805) (Anacystis nidulans R2).